Here is a 107-residue protein sequence, read N- to C-terminus: Translation initiation factor IF-1, chloroplastic (107 aa).

The S1-like domain occupies 8 to 83 (REKKNPREAK…SKGRIIYRLP (76 aa)). The tract at residues 81–107 (RLPHKDSKRTEDSKDTEDLKDTKDSKD) is disordered. Residues 83 to 107 (PHKDSKRTEDSKDTEDLKDTKDSKD) are compositionally biased toward basic and acidic residues.

It belongs to the IF-1 family. In terms of assembly, component of the 30S ribosomal translation pre-initiation complex which assembles on the 30S ribosome in the order IF-2 and IF-3, IF-1 and N-formylmethionyl-tRNA(fMet); mRNA recruitment can occur at any time during PIC assembly.

The protein localises to the plastid. Its subcellular location is the chloroplast. Its function is as follows. One of the essential components for the initiation of protein synthesis. Stabilizes the binding of IF-2 and IF-3 on the 30S subunit to which N-formylmethionyl-tRNA(fMet) subsequently binds. Helps modulate mRNA selection, yielding the 30S pre-initiation complex (PIC). Upon addition of the 50S ribosomal subunit IF-1, IF-2 and IF-3 are released leaving the mature 70S translation initiation complex. The protein is Translation initiation factor IF-1, chloroplastic of Saccharum hybrid (Sugarcane).